The primary structure comprises 226 residues: MAGQSDRKAALLDQVARVGKALANGRRLQILDLLAQGERAVEAIATATGMNLTTASANLQALKSGGLVEARREGTRQYYRIAGEDVARLFALVQVVADEHLADVAVAAADVLGSPEDAITRAELLRRREAGEVTLVDVRPHEEYQAGHIPGAINIPIAELADRLAELTGDRDIVAYCRGAYCVMAPDAVRIARDAGREVKRLDDGMLEWRLAGLPVDEGAPVGHGD.

The HTH arsR-type domain occupies 7 to 101; sequence RKAALLDQVA…LVQVVADEHL (95 aa). The H-T-H motif DNA-binding region spans 41–64; that stretch reads VEAIATATGMNLTTASANLQALKS. One can recognise a Rhodanese domain in the interval 129–218; sequence EAGEVTLVDV…WRLAGLPVDE (90 aa). Cys177 acts as the Cysteine persulfide intermediate in catalysis.

Part of a regulatory network that coordinates tolerance to the antitubercular drug bedaquiline. This Mycobacterium tuberculosis (strain ATCC 25618 / H37Rv) protein is HTH-type transcriptional regulator Rv0324.